Here is a 69-residue protein sequence, read N- to C-terminus: Putative membrane protein insertion efficiency factor (69 aa).

The protein belongs to the UPF0161 family.

It localises to the cell membrane. Its function is as follows. Could be involved in insertion of integral membrane proteins into the membrane. The chain is Putative membrane protein insertion efficiency factor from Thermomicrobium roseum (strain ATCC 27502 / DSM 5159 / P-2).